The following is a 315-amino-acid chain: 4-hydroxy-3-methylbut-2-enyl diphosphate reductase (315 aa).

Cys-12 is a [4Fe-4S] cluster binding site. His-41 and His-74 together coordinate (2E)-4-hydroxy-3-methylbut-2-enyl diphosphate. The dimethylallyl diphosphate site is built by His-41 and His-74. Isopentenyl diphosphate is bound by residues His-41 and His-74. Residue Cys-96 coordinates [4Fe-4S] cluster. His-124 provides a ligand contact to (2E)-4-hydroxy-3-methylbut-2-enyl diphosphate. A dimethylallyl diphosphate-binding site is contributed by His-124. An isopentenyl diphosphate-binding site is contributed by His-124. Glu-126 (proton donor) is an active-site residue. Residue Thr-168 participates in (2E)-4-hydroxy-3-methylbut-2-enyl diphosphate binding. Cys-198 contributes to the [4Fe-4S] cluster binding site. Residues Ser-226, Ser-227, Asn-228, and Ser-270 each coordinate (2E)-4-hydroxy-3-methylbut-2-enyl diphosphate. Ser-226, Ser-227, Asn-228, and Ser-270 together coordinate dimethylallyl diphosphate. Residues Ser-226, Ser-227, Asn-228, and Ser-270 each coordinate isopentenyl diphosphate.

Belongs to the IspH family. The cofactor is [4Fe-4S] cluster.

The enzyme catalyses isopentenyl diphosphate + 2 oxidized [2Fe-2S]-[ferredoxin] + H2O = (2E)-4-hydroxy-3-methylbut-2-enyl diphosphate + 2 reduced [2Fe-2S]-[ferredoxin] + 2 H(+). It carries out the reaction dimethylallyl diphosphate + 2 oxidized [2Fe-2S]-[ferredoxin] + H2O = (2E)-4-hydroxy-3-methylbut-2-enyl diphosphate + 2 reduced [2Fe-2S]-[ferredoxin] + 2 H(+). Its pathway is isoprenoid biosynthesis; dimethylallyl diphosphate biosynthesis; dimethylallyl diphosphate from (2E)-4-hydroxy-3-methylbutenyl diphosphate: step 1/1. It participates in isoprenoid biosynthesis; isopentenyl diphosphate biosynthesis via DXP pathway; isopentenyl diphosphate from 1-deoxy-D-xylulose 5-phosphate: step 6/6. In terms of biological role, catalyzes the conversion of 1-hydroxy-2-methyl-2-(E)-butenyl 4-diphosphate (HMBPP) into a mixture of isopentenyl diphosphate (IPP) and dimethylallyl diphosphate (DMAPP). Acts in the terminal step of the DOXP/MEP pathway for isoprenoid precursor biosynthesis. This is 4-hydroxy-3-methylbut-2-enyl diphosphate reductase from Pseudomonas fluorescens (strain SBW25).